Reading from the N-terminus, the 47-residue chain is Small, acid-soluble spore protein N (47 aa).

Residues 1-47 (MSNPKRSPNHFAPNHIGTQPRAAGGNKGKQMQDQSGQHAQVIQTKGE) form a disordered region. The segment covering 29-47 (KQMQDQSGQHAQVIQTKGE) has biased composition (polar residues).

It belongs to the SspN family.

It localises to the spore core. The polypeptide is Small, acid-soluble spore protein N (Geobacillus thermodenitrificans (strain NG80-2)).